The following is a 417-amino-acid chain: Zinc-finger homeodomain protein 4 (417 aa).

Polar residues predominate over residues 1 to 12; sequence MVSILQLQTRTE. Disordered stretches follow at residues 1–22 and 31–50; these read MVSI…ASAA and RQQQ…FQER. The segment covering 13–22 has biased composition (low complexity); sequence ASPASSASAA. Residues 36–46 are compositionally biased toward acidic residues; it reads QEGEEEEEEFE. The ZF-HD dimerization-type; degenerate zinc finger occupies 145–194; sequence YRECLKNHAAAIGGNATDGCGEFMPSGEEGSLEALKCSACGCHRNFHRKE. Disordered regions lie at residues 281 to 309 and 361 to 417; these read DEMD…FRTK and NLAK…LKLE. Residues 286–298 show a composition bias toward gly residues; the sequence is SGGGGGVGRGGGS. The homeobox DNA-binding region spans 303 to 366; that stretch reads KKRFRTKFTA…NNKHNLAKKP (64 aa). The span at 368–417 shows a compositional bias: pro residues; the sequence is PSSPPPPPQIPPMSMPPSPPPPQIPPMSMPPSPPPMPMPMPPSPPQLKLE.

In terms of assembly, homo- and heterodimer with other ZFHD proteins.

It localises to the nucleus. Its function is as follows. Putative transcription factor. The protein is Zinc-finger homeodomain protein 4 (ZHD4) of Oryza sativa subsp. japonica (Rice).